Here is an 846-residue protein sequence, read N- to C-terminus: Envelope glycoprotein gp160 (846 aa).

Positions 1 to 31 are cleaved as a signal peptide; the sequence is MRAREKERNCQNLWKWGIMLLGMLMTCSAAE. The Extracellular segment spans residues 32–674; the sequence is DLWVTVYYGV…ITKWLWYIKL (643 aa). The cysteines at positions 53 and 73 are disulfide-linked. N-linked (GlcNAc...) asparagine; by host glycans are attached at residues Asn-87, Asn-129, Asn-151, Asn-179, Asn-182, Asn-229, Asn-236, Asn-257, Asn-271, Asn-284, and Asn-290. Cystine bridges form between Cys-118–Cys-200, Cys-125–Cys-191, Cys-130–Cys-152, Cys-213–Cys-242, and Cys-223–Cys-234. Residues 130-151 are V1; that stretch reads CTDELRNSKGNGKVEEEEKRKN. The segment at 152–191 is V2; that stretch reads CSFNVRDKREQVYALFYKLDIVPIDNNNRTNSTNYRLINC. Residues 291 to 327 form a V3 region; that stretch reads CTRPYKYTRQRTSIGLRQSLYTITGKKKKTGYIGQAH. Cys-291 and Cys-328 are joined by a disulfide. N-linked (GlcNAc...) asparagine; by host glycosylation occurs at Asn-351. Residues 360–370 form a CD4-binding loop region; sequence SSGGDPEITSH. Cystine bridges form between Cys-374-Cys-435 and Cys-381-Cys-408. The segment at 381 to 408 is V4; that stretch reads CNTSRLFNSTWNQTNSTGFNNGTVTLPC. 8 N-linked (GlcNAc...) asparagine; by host glycosylation sites follow: Asn-382, Asn-388, Asn-392, Asn-395, Asn-401, Asn-438, Asn-451, and Asn-452. V5 stretches follow at residues 450-461 and 453-461; these read ANNSSHETIRPG and SSHETIRPG. The tract at residues 502–522 is fusion peptide; the sequence is AIGLGAVFLGFLGAAGSTMGA. Positions 564 to 582 are immunosuppression; sequence KQLQARVLAVERYLRDQQL. Cys-588 and Cys-594 are joined by a disulfide. N-linked (GlcNAc...) asparagine; by host glycans are attached at residues Asn-601, Asn-606, Asn-615, and Asn-627. Residues 623-657 adopt a coiled-coil conformation; the sequence is REIDNYTGLIYSLIEESQIQQEKNEKELLELDKWA. Positions 652–673 are MPER; binding to GalCer; that stretch reads ELDKWASLWNWFSITKWLWYIK. Residues 675-695 form a helical membrane-spanning segment; it reads FIMIVGGLIGLRIVFAVLSVV. Residues 696–846 are Cytoplasmic-facing; sequence NRVRQGYSPL…IRQGLERLLL (151 aa). The YXXL motif; contains endocytosis signal signature appears at 702 to 705; sequence YSPL. Residues Cys-754 and Cys-827 are each lipidated (S-palmitoyl cysteine; by host). The Di-leucine internalization motif signature appears at 845-846; sequence LL.

This sequence belongs to the HIV-1 env protein family. The mature envelope protein (Env) consists of a homotrimer of non-covalently associated gp120-gp41 heterodimers. The resulting complex protrudes from the virus surface as a spike. There seems to be as few as 10 spikes on the average virion. Interacts with host CD4, CCR5 and CXCR4. Gp120 also interacts with the C-type lectins CD209/DC-SIGN and CLEC4M/DC-SIGNR (collectively referred to as DC-SIGN(R)). Gp120 and gp41 interact with GalCer. Gp120 interacts with host ITGA4/ITGB7 complex; on CD4+ T-cells, this interaction results in rapid activation of integrin ITGAL/LFA-1, which facilitates efficient cell-to-cell spreading of HIV-1. Gp120 interacts with cell-associated heparan sulfate; this interaction increases virus infectivity on permissive cells and may be involved in infection of CD4- cells. In terms of assembly, the mature envelope protein (Env) consists of a homotrimer of non-covalently associated gp120-gp41 heterodimers. The resulting complex protrudes from the virus surface as a spike. There seems to be as few as 10 spikes on the average virion. Highly glycosylated by host. The high number of glycan on the protein is reffered to as 'glycan shield' because it contributes to hide protein sequence from adaptive immune system. Post-translationally, palmitoylation of the transmembrane protein and of Env polyprotein (prior to its proteolytic cleavage) is essential for their association with host cell membrane lipid rafts. Palmitoylation is therefore required for envelope trafficking to classical lipid rafts, but not for viral replication. In terms of processing, specific enzymatic cleavages in vivo yield mature proteins. Envelope glycoproteins are synthesized as an inactive precursor that is heavily N-glycosylated and processed likely by host cell furin in the Golgi to yield the mature SU and TM proteins. The cleavage site between SU and TM requires the minimal sequence [KR]-X-[KR]-R. About 2 of the 9 disulfide bonds of gp41 are reduced by P4HB/PDI, following binding to CD4 receptor.

It is found in the virion membrane. It localises to the host cell membrane. The protein resides in the host endosome membrane. In terms of biological role, oligomerizes in the host endoplasmic reticulum into predominantly trimers. In a second time, gp160 transits in the host Golgi, where glycosylation is completed. The precursor is then proteolytically cleaved in the trans-Golgi and thereby activated by cellular furin or furin-like proteases to produce gp120 and gp41. Functionally, attaches the virus to the host lymphoid cell by binding to the primary receptor CD4. This interaction induces a structural rearrangement creating a high affinity binding site for a chemokine coreceptor like CXCR4 and/or CCR5. Acts as a ligand for CD209/DC-SIGN and CLEC4M/DC-SIGNR, which are respectively found on dendritic cells (DCs), and on endothelial cells of liver sinusoids and lymph node sinuses. These interactions allow capture of viral particles at mucosal surfaces by these cells and subsequent transmission to permissive cells. HIV subverts the migration properties of dendritic cells to gain access to CD4+ T-cells in lymph nodes. Virus transmission to permissive T-cells occurs either in trans (without DCs infection, through viral capture and transmission), or in cis (following DCs productive infection, through the usual CD4-gp120 interaction), thereby inducing a robust infection. In trans infection, bound virions remain infectious over days and it is proposed that they are not degraded, but protected in non-lysosomal acidic organelles within the DCs close to the cell membrane thus contributing to the viral infectious potential during DCs' migration from the periphery to the lymphoid tissues. On arrival at lymphoid tissues, intact virions recycle back to DCs' cell surface allowing virus transmission to CD4+ T-cells. Its function is as follows. Acts as a class I viral fusion protein. Under the current model, the protein has at least 3 conformational states: pre-fusion native state, pre-hairpin intermediate state, and post-fusion hairpin state. During fusion of viral and target intracellular membranes, the coiled coil regions (heptad repeats) assume a trimer-of-hairpins structure, positioning the fusion peptide in close proximity to the C-terminal region of the ectodomain. The formation of this structure appears to drive apposition and subsequent fusion of viral and target cell membranes. Complete fusion occurs in host cell endosomes and is dynamin-dependent, however some lipid transfer might occur at the plasma membrane. The virus undergoes clathrin-dependent internalization long before endosomal fusion, thus minimizing the surface exposure of conserved viral epitopes during fusion and reducing the efficacy of inhibitors targeting these epitopes. Membranes fusion leads to delivery of the nucleocapsid into the cytoplasm. The polypeptide is Envelope glycoprotein gp160 (Human immunodeficiency virus type 1 group M subtype D (isolate NDK) (HIV-1)).